The sequence spans 88 residues: MAEAQKTVRTLTGRVVSDKMDKTITVLIERRVKHPIYGKYVKRSTKLHAHDETNQCKIGDKVSIRETRPQSKTKSWALVEVVERAVEV.

The protein belongs to the universal ribosomal protein uS17 family. Part of the 30S ribosomal subunit.

Its function is as follows. One of the primary rRNA binding proteins, it binds specifically to the 5'-end of 16S ribosomal RNA. The polypeptide is Small ribosomal subunit protein uS17 (Stutzerimonas stutzeri (strain A1501) (Pseudomonas stutzeri)).